The primary structure comprises 263 residues: tRNA uridine(34) hydroxylase (263 aa).

Positions 129-223 (EGREVVTLDT…YFEETDGAFY (95 aa)) constitute a Rhodanese domain. The active-site Cysteine persulfide intermediate is Cys-183.

This sequence belongs to the TrhO family.

The catalysed reaction is uridine(34) in tRNA + AH2 + O2 = 5-hydroxyuridine(34) in tRNA + A + H2O. Its function is as follows. Catalyzes oxygen-dependent 5-hydroxyuridine (ho5U) modification at position 34 in tRNAs. The protein is tRNA uridine(34) hydroxylase of Delftia acidovorans (strain DSM 14801 / SPH-1).